The sequence spans 209 residues: Imidazole glycerol phosphate synthase subunit HisH (209 aa).

A Glutamine amidotransferase type-1 domain is found at 1–205; sequence MIAIIDYGMG…KGVVETWKSS (205 aa). Catalysis depends on C79, which acts as the Nucleophile. Residues H180 and E182 contribute to the active site.

Heterodimer of HisH and HisF.

Its subcellular location is the cytoplasm. It carries out the reaction 5-[(5-phospho-1-deoxy-D-ribulos-1-ylimino)methylamino]-1-(5-phospho-beta-D-ribosyl)imidazole-4-carboxamide + L-glutamine = D-erythro-1-(imidazol-4-yl)glycerol 3-phosphate + 5-amino-1-(5-phospho-beta-D-ribosyl)imidazole-4-carboxamide + L-glutamate + H(+). It catalyses the reaction L-glutamine + H2O = L-glutamate + NH4(+). It functions in the pathway amino-acid biosynthesis; L-histidine biosynthesis; L-histidine from 5-phospho-alpha-D-ribose 1-diphosphate: step 5/9. Functionally, IGPS catalyzes the conversion of PRFAR and glutamine to IGP, AICAR and glutamate. The HisH subunit catalyzes the hydrolysis of glutamine to glutamate and ammonia as part of the synthesis of IGP and AICAR. The resulting ammonia molecule is channeled to the active site of HisF. The chain is Imidazole glycerol phosphate synthase subunit HisH from Bacillus thuringiensis subsp. konkukian (strain 97-27).